The sequence spans 1434 residues: DNA-directed RNA polymerase subunit beta (1434 aa).

This sequence belongs to the RNA polymerase beta chain family. As to quaternary structure, the RNAP catalytic core consists of 2 alpha, 1 beta, 1 beta' and 1 omega subunit. When a sigma factor is associated with the core the holoenzyme is formed, which can initiate transcription.

It carries out the reaction RNA(n) + a ribonucleoside 5'-triphosphate = RNA(n+1) + diphosphate. In terms of biological role, DNA-dependent RNA polymerase catalyzes the transcription of DNA into RNA using the four ribonucleoside triphosphates as substrates. The chain is DNA-directed RNA polymerase subunit beta from Ureaplasma parvum serovar 3 (strain ATCC 700970).